The following is a 458-amino-acid chain: MAECRPWLVLWVGCCGCLCLALGELLNDGLLAVGMGTGDAARQEEAALPLGDTVSEHMLRLYDKYRSGGGRAKESLRYRQALPDGNTVRSFRAMNGDEHKKCHYMFNLTSLTSSENILSATLHYYLGDLLNSSHRCPHSLFCTQHGHAKPEFTLYLTLWSFNALQNPTHVISNFLINVSASQRDHPLWQWKDITQAVRKAKEYGEAVLGFNLTIEYPNHRSIDILGLKPYILVYANDSAISEPDSVVSSLHGPHTPLALKPNRKTEKAEQRKKRSTEILLPLQNNELPGAEYQYSVDEEGWEERKPYKNLQGRQNEKDKNKKKLRKGSRQKSQTLQFDEQTLKKARRKQWNEPRNCARRYLKVDFADIGWSEWIISPKSFDAYYCSGACQFPMPKSLKPSNHATIQSIVRAVGVVPGIPEPCCVPEKMSSLSILFLDENKNVVLKVYPNMTVESCACR.

Residues 1 to 23 (MAECRPWLVLWVGCCGCLCLALG) form the signal peptide. Residues 24 to 348 (ELLNDGLLAV…EQTLKKARRK (325 aa)) constitute a propeptide that is removed on maturation. Residue Asn-107 is glycosylated (N-linked (GlcNAc...) asparagine). 2 disordered regions span residues 244 to 275 (DSVV…KKRS) and 303 to 335 (ERKP…SQTL). Residues 320 to 329 (NKKKLRKGSR) show a composition bias toward basic residues. Disulfide bonds link Cys-356/Cys-423, Cys-385/Cys-455, and Cys-389/Cys-457. An N-linked (GlcNAc...) asparagine glycan is attached at Asn-449.

Belongs to the TGF-beta family. In terms of assembly, homodimer. Can form heterodimers with ADMP, BMP-2-I and/or BMP-2-II, and DERRIERE.

It localises to the secreted. Dorsalizing factor. Antagonizes mesoderm formation by ventralizing BMPs. This is Bone morphogenetic protein 3 (bmp3) from Xenopus laevis (African clawed frog).